A 1044-amino-acid chain; its full sequence is Ribonucleoside-diphosphate reductase subunit alpha (1044 aa).

ATP-cone domains are found at residues 9 to 111 (YTIV…KAER), 118 to 217 (IAII…ARAR), and 235 to 325 (YVVQ…ETLG). Substrate-binding positions include T440, 455 to 456 (SC), G484, 668 to 672 (NLCTE), and 855 to 859 (PTATI). A disulfide bond links C456 and C685. N668 serves as the catalytic Proton acceptor. Catalysis depends on C670, which acts as the Cysteine radical intermediate. E672 (proton acceptor) is an active-site residue.

Belongs to the ribonucleoside diphosphate reductase large chain family. As to quaternary structure, tetramer of two alpha and two beta subunits.

It catalyses the reaction a 2'-deoxyribonucleoside 5'-diphosphate + [thioredoxin]-disulfide + H2O = a ribonucleoside 5'-diphosphate + [thioredoxin]-dithiol. Its activity is regulated as follows. Under complex allosteric control mediated by deoxynucleoside triphosphates and ATP binding. The type of nucleotide bound at the specificity site determines substrate preference. It seems probable that ATP makes the enzyme reduce CDP and UDP, dGTP favors ADP reduction and dTTP favors GDP reduction. Functionally, provides the precursors necessary for DNA synthesis. Catalyzes the biosynthesis of deoxyribonucleotides from the corresponding ribonucleotides. The sequence is that of Ribonucleoside-diphosphate reductase subunit alpha (nrdA) from Chlamydia pneumoniae (Chlamydophila pneumoniae).